The sequence spans 159 residues: Cyclic pyranopterin monophosphate synthase (159 aa).

Substrate contacts are provided by residues Met-75–His-77 and Met-113–Glu-114. Residue Asp-128 is part of the active site.

The protein belongs to the MoaC family. Homohexamer; trimer of dimers.

It catalyses the reaction (8S)-3',8-cyclo-7,8-dihydroguanosine 5'-triphosphate = cyclic pyranopterin phosphate + diphosphate. Its pathway is cofactor biosynthesis; molybdopterin biosynthesis. In terms of biological role, catalyzes the conversion of (8S)-3',8-cyclo-7,8-dihydroguanosine 5'-triphosphate to cyclic pyranopterin monophosphate (cPMP). This is Cyclic pyranopterin monophosphate synthase from Desulfatibacillum aliphaticivorans.